The sequence spans 167 residues: Leptin (167 aa).

The N-terminal stretch at methionine 1–alanine 21 is a signal peptide. Cysteine 117 and cysteine 167 are joined by a disulfide.

It belongs to the leptin family.

The protein resides in the secreted. Its function is as follows. Key player in the regulation of energy balance and body weight control. Once released into the circulation, has central and peripheral effects by binding LEPR, found in many tissues, which results in the activation of several major signaling pathways. In the hypothalamus, acts as an appetite-regulating factor that induces a decrease in food intake and an increase in energy consumption by inducing anorexinogenic factors and suppressing orexigenic neuropeptides, also regulates bone mass and secretion of hypothalamo-pituitary-adrenal hormones. In the periphery, increases basal metabolism, influences reproductive function, regulates pancreatic beta-cell function and insulin secretion, is pro-angiogenic for endothelial cell and affects innate and adaptive immunity. In the arcuate nucleus of the hypothalamus, activates by depolarization POMC neurons inducing FOS and SOCS3 expression to release anorexigenic peptides and inhibits by hyperpolarization NPY neurons inducing SOCS3 with a consequent reduction on release of orexigenic peptides. In addition to its known satiety inducing effect, has a modulatory role in nutrient absorption. In the intestine, reduces glucose absorption by enterocytes by activating PKC and leading to a sequential activation of p38, PI3K and ERK signaling pathways which exerts an inhibitory effect on glucose absorption. Acts as a growth factor on certain tissues, through the activation of different signaling pathways increases expression of genes involved in cell cycle regulation such as CCND1, via JAK2-STAT3 pathway, or VEGFA, via MAPK1/3 and PI3K-AKT1 pathways. May also play an apoptotic role via JAK2-STAT3 pathway and up-regulation of BIRC5 expression. Pro-angiogenic, has mitogenic activity on vascular endothelial cells and plays a role in matrix remodeling by regulating the expression of matrix metalloproteinases (MMPs) and tissue inhibitors of metalloproteinases (TIMPs). In innate immunity, modulates the activity and function of neutrophils by increasing chemotaxis and the secretion of oxygen radicals. Increases phagocytosis by macrophages and enhances secretion of pro-inflammatory mediators. Increases cytotoxic ability of NK cells. Plays a pro-inflammatory role, in synergy with IL1B, by inducing NOS2 which promotes the production of IL6, IL8 and Prostaglandin E2, through a signaling pathway that involves JAK2, PI3K, MAP2K1/MEK1 and MAPK14/p38. In adaptive immunity, promotes the switch of memory T-cells towards T helper-1 cell immune responses. Increases CD4(+)CD25(-) T-cell proliferation and reduces autophagy during TCR (T-cell receptor) stimulation, through MTOR signaling pathway activation and BCL2 up-regulation. The chain is Leptin (LEP) from Macaca mulatta (Rhesus macaque).